The primary structure comprises 286 residues: Energy-coupling factor transporter ATP-binding protein EcfA2 (286 aa).

The ABC transporter domain maps to I3–A245. ATP is bound at residue G40 to S47.

This sequence belongs to the ABC transporter superfamily. Energy-coupling factor EcfA family. Forms a stable energy-coupling factor (ECF) transporter complex composed of 2 membrane-embedded substrate-binding proteins (S component), 2 ATP-binding proteins (A component) and 2 transmembrane proteins (T component).

The protein localises to the cell membrane. In terms of biological role, ATP-binding (A) component of a common energy-coupling factor (ECF) ABC-transporter complex. Unlike classic ABC transporters this ECF transporter provides the energy necessary to transport a number of different substrates. This is Energy-coupling factor transporter ATP-binding protein EcfA2 from Clostridium acetobutylicum (strain ATCC 824 / DSM 792 / JCM 1419 / IAM 19013 / LMG 5710 / NBRC 13948 / NRRL B-527 / VKM B-1787 / 2291 / W).